We begin with the raw amino-acid sequence, 320 residues long: Elongation factor Ts (320 aa).

The involved in Mg(2+) ion dislocation from EF-Tu stretch occupies residues 82 to 85 (TDFV).

Belongs to the EF-Ts family.

Its subcellular location is the cytoplasm. Its function is as follows. Associates with the EF-Tu.GDP complex and induces the exchange of GDP to GTP. It remains bound to the aminoacyl-tRNA.EF-Tu.GTP complex up to the GTP hydrolysis stage on the ribosome. The protein is Elongation factor Ts of Flavobacterium johnsoniae (strain ATCC 17061 / DSM 2064 / JCM 8514 / BCRC 14874 / CCUG 350202 / NBRC 14942 / NCIMB 11054 / UW101) (Cytophaga johnsonae).